The following is a 142-amino-acid chain: Large ribosomal subunit protein uL11 (142 aa).

The protein belongs to the universal ribosomal protein uL11 family. Part of the ribosomal stalk of the 50S ribosomal subunit. Interacts with L10 and the large rRNA to form the base of the stalk. L10 forms an elongated spine to which L12 dimers bind in a sequential fashion forming a multimeric L10(L12)X complex. Post-translationally, one or more lysine residues are methylated.

Functionally, forms part of the ribosomal stalk which helps the ribosome interact with GTP-bound translation factors. This is Large ribosomal subunit protein uL11 from Rhodopseudomonas palustris (strain BisB5).